We begin with the raw amino-acid sequence, 642 residues long: Threonine--tRNA ligase (642 aa).

Residues 1 to 63 (MNDITVTLPD…YNDARVVIVT (63 aa)) enclose the TGS domain. The interval 242–533 (DHRKIGQELD…LIEHFNGKFP (292 aa)) is catalytic. 3 residues coordinate Zn(2+): Cys334, His385, and His510.

It belongs to the class-II aminoacyl-tRNA synthetase family. As to quaternary structure, homodimer. Zn(2+) serves as cofactor.

The protein localises to the cytoplasm. The catalysed reaction is tRNA(Thr) + L-threonine + ATP = L-threonyl-tRNA(Thr) + AMP + diphosphate + H(+). In terms of biological role, catalyzes the attachment of threonine to tRNA(Thr) in a two-step reaction: L-threonine is first activated by ATP to form Thr-AMP and then transferred to the acceptor end of tRNA(Thr). This is Threonine--tRNA ligase from Haloquadratum walsbyi (strain DSM 16790 / HBSQ001).